The following is a 183-amino-acid chain: Large ribosomal subunit protein uL5 (183 aa).

It belongs to the universal ribosomal protein uL5 family. As to quaternary structure, part of the 50S ribosomal subunit; part of the 5S rRNA/L5/L18/L25 subcomplex. Contacts the 5S rRNA and the P site tRNA. Forms a bridge to the 30S subunit in the 70S ribosome.

Its function is as follows. This is one of the proteins that bind and probably mediate the attachment of the 5S RNA into the large ribosomal subunit, where it forms part of the central protuberance. In the 70S ribosome it contacts protein S13 of the 30S subunit (bridge B1b), connecting the 2 subunits; this bridge is implicated in subunit movement. Contacts the P site tRNA; the 5S rRNA and some of its associated proteins might help stabilize positioning of ribosome-bound tRNAs. The protein is Large ribosomal subunit protein uL5 of Tropheryma whipplei (strain TW08/27) (Whipple's bacillus).